Reading from the N-terminus, the 474-residue chain is PRAME family member 10 (474 aa).

Residues 97–124 (RWKLQVLDLRDVDENFWTIWSGARVLSC) form an LRR 1; degenerate repeat. The LRR 2; degenerate repeat unit spans residues 179–203 (HLCCSKVQNYSMPTSSFRNLLERIY). An LRR 3; degenerate repeat occupies 204–230 (PDSIQELEVWKKCSLNKTGKFAPYLSQ). Residues 231-265 (MSNLRELFLAFGYERELYVSVQWPCIPDLDSPFLC) form an LRR 4; degenerate repeat. 5 LRR repeats span residues 266–291 (LYYP…LRYL), 292–323 (KNPL…SQLK), 324–342 (ELRL…PLGV), 348–375 (AATL…ALSH), and 376–400 (CSQL…LLRH).

It belongs to the PRAME family.

This chain is PRAME family member 10, found in Homo sapiens (Human).